A 264-amino-acid chain; its full sequence is Thymidylate synthase (264 aa).

Arg21 provides a ligand contact to dUMP. His51 contributes to the (6R)-5,10-methylene-5,6,7,8-tetrahydrofolate binding site. 126-127 contributes to the dUMP binding site; sequence RR. The active-site Nucleophile is Cys146. DUMP contacts are provided by residues 166-169, Asn177, and 207-209; these read RSAD and HLY. Asp169 lines the (6R)-5,10-methylene-5,6,7,8-tetrahydrofolate pocket. Ala263 contributes to the (6R)-5,10-methylene-5,6,7,8-tetrahydrofolate binding site.

Belongs to the thymidylate synthase family. Bacterial-type ThyA subfamily. Homodimer.

The protein localises to the cytoplasm. The enzyme catalyses dUMP + (6R)-5,10-methylene-5,6,7,8-tetrahydrofolate = 7,8-dihydrofolate + dTMP. It participates in pyrimidine metabolism; dTTP biosynthesis. Its function is as follows. Catalyzes the reductive methylation of 2'-deoxyuridine-5'-monophosphate (dUMP) to 2'-deoxythymidine-5'-monophosphate (dTMP) while utilizing 5,10-methylenetetrahydrofolate (mTHF) as the methyl donor and reductant in the reaction, yielding dihydrofolate (DHF) as a by-product. This enzymatic reaction provides an intracellular de novo source of dTMP, an essential precursor for DNA biosynthesis. The polypeptide is Thymidylate synthase (Legionella pneumophila (strain Paris)).